Reading from the N-terminus, the 669-residue chain is MGANSSTIKELSENEYLKKLSGMDSISENEPFWNQLLSFTLSTPTNSADSKLLEEGTLSICKSLIENNPRTGNLGALIRVFLSRTKELKISAECQNQLFIWQAHNALFIICCLIKVFTSQVSEEELLLHFTYRATDPGNYEADTEDLFEELLFCLIQLIVEIPLLDLTYSILLEAVTALIVLLSYQLFHKDILHESPIHKHLMNGRCLPYTSRLVKTLLYNFIRQEKSPPPGSHIFPQQQDGGGLLYGLASGVASGIWTVLTLGGVGSKPTPQQEQSSPLANQSLLLLLVLSNLTDSPDCPNPFRQSVTFFKNTQDSSVSPTPNPHSFQINFNSLYTSLCEQQKSDQATLLLYTLLHQNSNVRTYVLARSDMENLVLPILEILYHVEERNSHHVYMALIILLILTEDDGFNRSIHEVILKNITWYTERVLTEISLGSLLILVVIRTIQFNMTRTRDKYLHTNCLAALANMSAQFRSLHQYAAQRIISLFSLLSKKHNKVLEQATQSLRGSLGSDESPLPDYAQDLNVIEEVIRMMLEIINSCLTNSLHHNPNMVYALLYKRELFEQFRSHPSFQDIMQNIDMVISFFSLRLEQAGADLSVERVLEVIKQGAVALPKDRLRKFPELKFKYVEEEQPEEFFIPYVWSLVYHSGVGLYWNPQDVQLFTMDSG.

The N-myristoyl glycine moiety is linked to residue Gly-2.

This sequence belongs to the dymeclin family. Myristoylated in vitro; myristoylation is not essential for protein targeting to Golgi compartment.

The protein localises to the cytoplasm. The protein resides in the golgi apparatus. In terms of biological role, necessary for correct organization of Golgi apparatus. This chain is Dymeclin (dym), found in Xenopus laevis (African clawed frog).